A 106-amino-acid chain; its full sequence is Thiosulfate sulfurtransferase GlpE (106 aa).

In terms of domain architecture, Rhodanese spans 17–105 (SRGEARLVDI…WHRASLPVEA (89 aa)). The Cysteine persulfide intermediate role is filled by cysteine 65.

Belongs to the GlpE family.

The protein localises to the cytoplasm. It carries out the reaction thiosulfate + hydrogen cyanide = thiocyanate + sulfite + 2 H(+). The catalysed reaction is thiosulfate + [thioredoxin]-dithiol = [thioredoxin]-disulfide + hydrogen sulfide + sulfite + 2 H(+). Transferase that catalyzes the transfer of sulfur from thiosulfate to thiophilic acceptors such as cyanide or dithiols. May function in a CysM-independent thiosulfate assimilation pathway by catalyzing the conversion of thiosulfate to sulfite, which can then be used for L-cysteine biosynthesis. This chain is Thiosulfate sulfurtransferase GlpE, found in Vibrio vulnificus (strain CMCP6).